We begin with the raw amino-acid sequence, 218 residues long: N-(5'-phosphoribosyl)anthranilate isomerase (218 aa).

Belongs to the TrpF family.

It carries out the reaction N-(5-phospho-beta-D-ribosyl)anthranilate = 1-(2-carboxyphenylamino)-1-deoxy-D-ribulose 5-phosphate. It functions in the pathway amino-acid biosynthesis; L-tryptophan biosynthesis; L-tryptophan from chorismate: step 3/5. This chain is N-(5'-phosphoribosyl)anthranilate isomerase, found in Lachnoclostridium phytofermentans (strain ATCC 700394 / DSM 18823 / ISDg) (Clostridium phytofermentans).